We begin with the raw amino-acid sequence, 392 residues long: MITLITEQLQKQTLDELKCTRFSISLPLPDHADISNCGNPFQLVSEGASWRGLPHCSCAEFQDSLNFSYHPSGLSLHLRPPSRGSSPKEQPLSQVLRPEPPDPEKLPVPPAPPSKRHCRSLSVPVDLSRWQPVWRPAPSKLWTPIKHRGSGGGGGPQVPHQSPPKRVSSLRFLQAPSASSQCAPAHRPYSPPFFSLALAQDSSRPCATSPQSGSWESDAESLSPCPPQRRFSLSPSLGPQASRFLPSARSSPASSPELPWRPRGLRNLPRSRSQPCDLDARKTGVKRRHEEDPRRLRPSLDFDKMNQKPYSGGLCLQETAREGSSISPPWFMACSPPPLSASCSPTGGSSQVLSESEEEEEGAVRWGRQALSKRTLCQQDFGDLDLNLIEEN.

Met1 bears the N-acetylmethionine mark. The interval His77–Ser120 is disordered. A compositionally biased stretch (polar residues) spans Arg83–Ser93. Phosphoserine occurs at positions 122 and 162. 3 disordered regions span residues Leu141 to Val167, Ser203 to Asp303, and Ser340 to Val364. Polar residues predominate over residues Ser203–Trp215. Phosphoserine occurs at positions 232, 234, 255, 273, and 299. A compositionally biased stretch (low complexity) spans Ala241–Pro256. The span at Leu278–Asp303 shows a compositional bias: basic and acidic residues.

This sequence belongs to the FAM53 family.

The chain is Protein FAM53C from Pongo abelii (Sumatran orangutan).